We begin with the raw amino-acid sequence, 289 residues long: ATP synthase gamma chain (289 aa).

It belongs to the ATPase gamma chain family. F-type ATPases have 2 components, CF(1) - the catalytic core - and CF(0) - the membrane proton channel. CF(1) has five subunits: alpha(3), beta(3), gamma(1), delta(1), epsilon(1). CF(0) has three main subunits: a, b and c.

The protein localises to the cell membrane. Functionally, produces ATP from ADP in the presence of a proton gradient across the membrane. The gamma chain is believed to be important in regulating ATPase activity and the flow of protons through the CF(0) complex. In Mycoplasmoides gallisepticum (strain R(low / passage 15 / clone 2)) (Mycoplasma gallisepticum), this protein is ATP synthase gamma chain.